The following is a 436-amino-acid chain: MFESKINPLWQSFILAVQEEVKPALGCTEPISLALAAAAAAAELDGTVERIDAWVSPNLMKNGMGVTVPGTGMVGLPIAAALGALGGDAKAGLEVLKDASAKAVADAKAMLAAGHVAVMLQEPCNDILFSRAKVYSGDSWACVTIVGDHTNIVRIETDKGVVFTQADNAQEEEKTSPLGVLSHTSLEEILAFVNAVPFDAIRFILDAARLNGALSQEGLRGSWGLHIGSTLAKQCDRGLLAKDLSTAILIRTSAASDARMGGATLPAMSNSGSGNQGITATVPVMVVAEHVGADDECLARALMLSHLSAIYIHHQLPRLSALCAATTAAMGAAAGMAWLIDGRYDTIAMAISSMIGDVSGMICDGASNSCAMKVSTSASAAWKAVLMALDDTAVTGNEGIVAHNVEQSISNLCSLACRSMQQTDKQIIEIMASKAH.

Belongs to the UPF0597 family.

The chain is UPF0597 protein YhaM from Salmonella typhi.